The following is a 511-amino-acid chain: 2-isopropylmalate synthase (511 aa).

In terms of domain architecture, Pyruvate carboxyltransferase spans 6 to 269; the sequence is IIIFDTTLRD…YTDIKCENIF (264 aa). Mn(2+) is bound by residues aspartate 15, histidine 203, histidine 205, and asparagine 239. A regulatory domain region spans residues 394–511; it reads VIEKLSVISG…SLKVEERKMA (118 aa).

It belongs to the alpha-IPM synthase/homocitrate synthase family. LeuA type 1 subfamily. As to quaternary structure, homodimer. Requires Mn(2+) as cofactor.

It localises to the cytoplasm. The catalysed reaction is 3-methyl-2-oxobutanoate + acetyl-CoA + H2O = (2S)-2-isopropylmalate + CoA + H(+). Its pathway is amino-acid biosynthesis; L-leucine biosynthesis; L-leucine from 3-methyl-2-oxobutanoate: step 1/4. Its function is as follows. Catalyzes the condensation of the acetyl group of acetyl-CoA with 3-methyl-2-oxobutanoate (2-ketoisovalerate) to form 3-carboxy-3-hydroxy-4-methylpentanoate (2-isopropylmalate). The protein is 2-isopropylmalate synthase of Campylobacter jejuni subsp. jejuni serotype O:23/36 (strain 81-176).